Reading from the N-terminus, the 204-residue chain is Recombination protein RecR (204 aa).

Residues 58-75 (CSICQNVTDRDADPCRIC) form a C4-type zinc finger. Positions 83-181 (SVICVVESPV…MVTKIARGIP (99 aa)) constitute a Toprim domain.

This sequence belongs to the RecR family.

May play a role in DNA repair. It seems to be involved in an RecBC-independent recombinational process of DNA repair. It may act with RecF and RecO. The polypeptide is Recombination protein RecR (Chlorobium phaeovibrioides (strain DSM 265 / 1930) (Prosthecochloris vibrioformis (strain DSM 265))).